A 96-amino-acid chain; its full sequence is Co-chaperonin GroES (96 aa).

Belongs to the GroES chaperonin family. In terms of assembly, heptamer of 7 subunits arranged in a ring. Interacts with the chaperonin GroEL.

The protein localises to the cytoplasm. Functionally, together with the chaperonin GroEL, plays an essential role in assisting protein folding. The GroEL-GroES system forms a nano-cage that allows encapsulation of the non-native substrate proteins and provides a physical environment optimized to promote and accelerate protein folding. GroES binds to the apical surface of the GroEL ring, thereby capping the opening of the GroEL channel. This chain is Co-chaperonin GroES, found in Dechloromonas aromatica (strain RCB).